The chain runs to 245 residues: Probable transcriptional regulatory protein APH_0480 (245 aa).

The protein belongs to the TACO1 family.

The protein localises to the cytoplasm. This is Probable transcriptional regulatory protein APH_0480 from Anaplasma phagocytophilum (strain HZ).